The chain runs to 227 residues: 2-C-methyl-D-erythritol 4-phosphate cytidylyltransferase (227 aa).

It belongs to the IspD/TarI cytidylyltransferase family. IspD subfamily.

It catalyses the reaction 2-C-methyl-D-erythritol 4-phosphate + CTP + H(+) = 4-CDP-2-C-methyl-D-erythritol + diphosphate. Its pathway is isoprenoid biosynthesis; isopentenyl diphosphate biosynthesis via DXP pathway; isopentenyl diphosphate from 1-deoxy-D-xylulose 5-phosphate: step 2/6. Catalyzes the formation of 4-diphosphocytidyl-2-C-methyl-D-erythritol from CTP and 2-C-methyl-D-erythritol 4-phosphate (MEP). The polypeptide is 2-C-methyl-D-erythritol 4-phosphate cytidylyltransferase (Tolumonas auensis (strain DSM 9187 / NBRC 110442 / TA 4)).